The following is a 152-amino-acid chain: Ribosome maturation factor RimP (152 aa).

This sequence belongs to the RimP family.

The protein localises to the cytoplasm. In terms of biological role, required for maturation of 30S ribosomal subunits. This chain is Ribosome maturation factor RimP, found in Yersinia pestis.